The primary structure comprises 244 residues: MTEKNEKTHKTIEQAEQEGKYIRKVRSFVKREGRLTNNQERAINDHWQTMGLNHSDGVIDAPTLFANENPVVLEIGFGMGKSLVEMAKAAPELNFIGIEVHKPGVGACISSAVEESVSNLKVCEHDAIEILADCIPDDTLTTVQLFFPDPWHKKKHHKRRIVSAEFVETIRQKLKVGGVFHMATDWENYAECMLEDMQSAPGYNNLSESNDYVPRPDSRPLTKFENRGQNLGHGVWDLQFAKKA.

Residues E74, E99, D126, and D149 each coordinate S-adenosyl-L-methionine. D149 is an active-site residue. Residues K153, D185, and 222 to 225 contribute to the substrate site; that span reads TKFE.

This sequence belongs to the class I-like SAM-binding methyltransferase superfamily. TrmB family.

The catalysed reaction is guanosine(46) in tRNA + S-adenosyl-L-methionine = N(7)-methylguanosine(46) in tRNA + S-adenosyl-L-homocysteine. Its pathway is tRNA modification; N(7)-methylguanine-tRNA biosynthesis. Functionally, catalyzes the formation of N(7)-methylguanine at position 46 (m7G46) in tRNA. This Colwellia psychrerythraea (strain 34H / ATCC BAA-681) (Vibrio psychroerythus) protein is tRNA (guanine-N(7)-)-methyltransferase.